Consider the following 348-residue polypeptide: Fe(3+) ions import ATP-binding protein FbpC (348 aa).

The 231-residue stretch at Leu-6–Leu-236 folds into the ABC transporter domain. Gly-38–Ser-45 contacts ATP.

The protein belongs to the ABC transporter superfamily. Fe(3+) ion importer (TC 3.A.1.10) family. In terms of assembly, the complex is composed of two ATP-binding proteins (FbpC), two transmembrane proteins (FbpB) and a solute-binding protein (FbpA).

It is found in the cell membrane. The catalysed reaction is Fe(3+)(out) + ATP + H2O = Fe(3+)(in) + ADP + phosphate + H(+). In terms of biological role, part of the ABC transporter complex FbpABC involved in Fe(3+) ions import. Responsible for energy coupling to the transport system. This chain is Fe(3+) ions import ATP-binding protein FbpC, found in Streptomyces coelicolor (strain ATCC BAA-471 / A3(2) / M145).